The sequence spans 266 residues: Transcription factor atoh8 (266 aa).

The disordered stretch occupies residues 140-164 (AASQAPAGGSERAESPRKRAGEPSG). Over residues 150–160 (ERAESPRKRAG) the composition is skewed to basic and acidic residues. Positions 175-188 (TRRLLANARERTRV) are basic motif; degenerate. Positions 175 to 227 (TRRLLANARERTRVHTISAAFEALRKQVPCYSYGQKLSKLAILRIACNYILSL) constitute a bHLH domain. A helix-loop-helix motif region spans residues 189–227 (HTISAAFEALRKQVPCYSYGQKLSKLAILRIACNYILSL).

The protein localises to the nucleus. It localises to the nucleus speckle. Its subcellular location is the cytoplasm. Functionally, transcription factor that binds a palindromic (canonical) core consensus DNA sequence 5'-CANNTG- 3' known as an E-box element, possibly as a heterodimer with other bHLH proteins. During development, is required for heart looping and swim bladder formation by acting in concert with GATA4 and ZFPM1. During the development of both the retina and skeletal muscles is required for neural retinal cell through modulating PAX6 and NEUROG3 expression and myogenic differentiation. The polypeptide is Transcription factor atoh8 (Danio rerio (Zebrafish)).